Here is a 389-residue protein sequence, read N- to C-terminus: MDSLCLRAAPASALASGPAFEALLDGVRDRARLGEFDRQRHISRDVIDAFKAHGVYRALVPKRFGGLECSPAAFCEMIERISHADGSAGWVASFGMSPVYLAALPLETIAEIYGNSPDTVFAGGIFPPQAAEIVSGGFKINGRWKYSSGSMGADIVGVGIAPRNGDKLDLPRLAVLPRSQARIEETWDTVGLLGTGSHDLVVEDVVVGEQWTFVRGGKPNLDEPFFRYPSLSFATQVLSVVGLGIARAALDELSGMASGRISVTGAPALADRPLAQVDVAKAEAALRSARAFFYESIERAWEHVLAGDPVPVDVTNLLRLSSTHAARVAAEVARSAQMLSGMTGIYNESPLARCVNDAQVVTQHAFMGDVTYQNAGAMFFGKQPLPGYL.

It belongs to the HpaH/HsaA monooxygenase family.

The catalysed reaction is (indol-3-yl)acetate + NADH + O2 + H(+) = 2-hydroxy-(1H-indol-3-yl)acetate + NAD(+) + H2O. It catalyses the reaction indole + NADH + O2 + H(+) = indoxyl + NAD(+) + H2O. Its function is as follows. Involved in the degradation of the plant hormone indole-3-acetic acid (IAA). Catalyzes the first step of the pathway, the conversion of IAA to 2-hydroxy-IAA (2-OH-IAA). Can also convert indole to indoxyl, which spontaneously dimerizes in the presence of oxygen to form the blue pigment indigo. The protein is Indole-3-acetate monooxygenase of Pseudomonas putida (Arthrobacter siderocapsulatus).